We begin with the raw amino-acid sequence, 282 residues long: uncharacterized protein (282 aa).

Transmembrane regions (helical) follow at residues 9–29 (LLKIFVVGVFPCTLFVNAPHG), 43–63 (ISGRVGWVLMELVAPLTFLYA), 123–143 (VFVSAVLFNFLNGMSIGLYLV), 158–178 (YIGMFLWLMGWLGNMYHDNIL), and 232–252 (LAAGPSAEPFWWFFLSEILLM).

This sequence belongs to the steroid 5-alpha reductase family.

The protein localises to the endoplasmic reticulum membrane. This is an uncharacterized protein from Schizosaccharomyces pombe (strain 972 / ATCC 24843) (Fission yeast).